Here is a 294-residue protein sequence, read N- to C-terminus: GDP-6-deoxy-D-talose 4-dehydrogenase (294 aa).

NAD(+) is bound by residues 11-12 (FI), 38-39 (DL), 60-64 (LAALT), T104, Y128, K132, and F154. Positions 104 and 128 each coordinate substrate. The Proton acceptor role is filled by Y128. Substrate-binding residues include N155 and R190.

It belongs to the NAD(P)-dependent epimerase/dehydratase family.

The enzyme catalyses GDP-6-deoxy-alpha-D-talose + NAD(+) = GDP-4-dehydro-alpha-D-rhamnose + NADH + H(+). The catalysed reaction is GDP-6-deoxy-alpha-D-talose + NADP(+) = GDP-4-dehydro-alpha-D-rhamnose + NADPH + H(+). The protein operates within bacterial outer membrane biogenesis; LPS O-antigen biosynthesis. Functionally, catalyzes the conversion of GDP-4-dehydro-6-deoxy-D-mannose to GDP-6-deoxy-D-talose. The sequence is that of GDP-6-deoxy-D-talose 4-dehydrogenase (tld) from Aggregatibacter actinomycetemcomitans (Actinobacillus actinomycetemcomitans).